Consider the following 518-residue polypeptide: Putative cytochrome P450 CYP13A7 (518 aa).

Cysteine 464 lines the heme pocket.

It belongs to the cytochrome P450 family. Heme is required as a cofactor.

Cytochromes P450 are a group of heme-thiolate monooxygenases. They oxidize a variety of structurally unrelated compounds, including steroids, fatty acids, and xenobiotics. The chain is Putative cytochrome P450 CYP13A7 (cyp-13A7) from Caenorhabditis elegans.